We begin with the raw amino-acid sequence, 635 residues long: Biosynthetic arginine decarboxylase (635 aa).

Position 100 is an N6-(pyridoxal phosphate)lysine (lysine 100). Substrate is bound at residue 282–292 (LDIGGGLGVDY).

Belongs to the Orn/Lys/Arg decarboxylase class-II family. SpeA subfamily. Mg(2+) serves as cofactor. Pyridoxal 5'-phosphate is required as a cofactor.

It carries out the reaction L-arginine + H(+) = agmatine + CO2. Its pathway is amine and polyamine biosynthesis; agmatine biosynthesis; agmatine from L-arginine: step 1/1. Functionally, catalyzes the biosynthesis of agmatine from arginine. This chain is Biosynthetic arginine decarboxylase, found in Geotalea uraniireducens (strain Rf4) (Geobacter uraniireducens).